A 398-amino-acid polypeptide reads, in one-letter code: Probable elongation factor 1-gamma (398 aa).

Residues 66-199 (GTSANAETVQ…SVAQFNQAKF (134 aa)) enclose the GST C-terminal domain. The interval 210–248 (APKAEKPKKEAKPAAAAAQPEDDEPKEEKSKDPFQDMPK) is disordered. A compositionally biased stretch (basic and acidic residues) spans 211–221 (PKAEKPKKEAK). In terms of domain architecture, EF-1-gamma C-terminal spans 239–398 (SKDPFQDMPK…KKFNQGKIFK (160 aa)).

EF-1 is composed of four subunits: alpha, beta, delta, and gamma. Post-translationally, AMPylated by fic-1.

Functionally, probably plays a role in anchoring the complex to other cellular components. This Caenorhabditis elegans protein is Probable elongation factor 1-gamma.